Consider the following 208-residue polypeptide: Small ribosomal subunit protein uS4 (208 aa).

One can recognise an S4 RNA-binding domain in the interval 98 to 161; sequence QRLDNLVYRM…KNNPQILRAV (64 aa).

Belongs to the universal ribosomal protein uS4 family. As to quaternary structure, part of the 30S ribosomal subunit. Contacts protein S5. The interaction surface between S4 and S5 is involved in control of translational fidelity.

In terms of biological role, one of the primary rRNA binding proteins, it binds directly to 16S rRNA where it nucleates assembly of the body of the 30S subunit. Functionally, with S5 and S12 plays an important role in translational accuracy. This chain is Small ribosomal subunit protein uS4, found in Campylobacter hominis (strain ATCC BAA-381 / DSM 21671 / CCUG 45161 / LMG 19568 / NCTC 13146 / CH001A).